The following is a 188-amino-acid chain: F-box only protein 36 (188 aa).

The region spanning 91–137 (FDFLERLSDDLLLTIISYLDLEDIARLCQTSHRFAKLCMSDKLWEQI) is the F-box domain.

As to quaternary structure, directly interacts with SKP1 and CUL1.

In terms of biological role, substrate-recognition component of the SCF (SKP1-CUL1-F-box protein)-type E3 ubiquitin ligase complex. This Homo sapiens (Human) protein is F-box only protein 36 (FBXO36).